The primary structure comprises 729 residues: Dipeptidyl peptidase 3 (729 aa).

Position 459 (H459) interacts with Zn(2+). E460 is an active-site residue. Residues H464 and E517 each contribute to the Zn(2+) site.

The protein belongs to the peptidase M49 family. Requires Zn(2+) as cofactor.

It is found in the cytoplasm. The catalysed reaction is Release of an N-terminal dipeptide from a peptide comprising four or more residues, with broad specificity. Also acts on dipeptidyl 2-naphthylamides.. In Nematostella vectensis (Starlet sea anemone), this protein is Dipeptidyl peptidase 3 (dpp3).